The chain runs to 392 residues: 23S rRNA (uracil(747)-C(5))-methyltransferase RlmC (392 aa).

[4Fe-4S] cluster contacts are provided by Cys4, Cys12, Cys15, and Cys93. Residues Gln218, Phe247, Glu275, and Asn321 each coordinate S-adenosyl-L-methionine. Cys348 acts as the Nucleophile in catalysis.

Belongs to the class I-like SAM-binding methyltransferase superfamily. RNA M5U methyltransferase family. RlmC subfamily.

The catalysed reaction is uridine(747) in 23S rRNA + S-adenosyl-L-methionine = 5-methyluridine(747) in 23S rRNA + S-adenosyl-L-homocysteine + H(+). Catalyzes the formation of 5-methyl-uridine at position 747 (m5U747) in 23S rRNA. This chain is 23S rRNA (uracil(747)-C(5))-methyltransferase RlmC, found in Haemophilus influenzae (strain PittEE).